The primary structure comprises 781 residues: Catenin beta-1 (781 aa).

The segment at 34–56 (GIHSGATTTAPSLSGKGNPEDED) is disordered. ARM repeat units lie at residues 141–180 (NYQD…QLSK), 225–264 (REGL…NLLL), 267–306 (EGAK…ILAY), 351–390 (SSNK…NLSD), 391–429 (AATK…NLTC), 432–473 (YKNK…HLTS), 479–519 (EMAQ…NLAL), 521–562 (PANH…QFVE), 584–623 (IHNR…DVAQ), and 625–664 (KEAA…RMSE). Residues 735 to 745 (MDHDMGGHHPG) show a composition bias toward basic and acidic residues. Residues 735–781 (MDHDMGGHHPGADYPVDGLPDLSHAQDLMDGLPPGDSNQLAWFDTDL) are disordered.

This sequence belongs to the beta-catenin family. Interacts with EP-Cadherin/CDH3. Interacts with custos; the interaction is positively regulated by Wnt stimulation. In terms of processing, phosphorylation by gsk3b promotes ubiquitination and subsequent degradation by the proteasome. Post-translationally, ubiquitinated when phosphorylated by gsk3b, leading to its degradation. As to expression, expressed at intercalated disks in the heart (at protein level).

The protein localises to the cytoplasm. It localises to the nucleus. It is found in the cell membrane. Key downstream component of the canonical Wnt signaling pathway. In the absence of Wnt, forms a complex with axin1, axin2, apc, csnk1a1 and gsk3b that promotes phosphorylation on N-terminal Ser and Thr residues and ubiquitination of ctnnb1 and its subsequent degradation by the proteasome. In the presence of Wnt ligand, ctnnb1 is not ubiquitinated and accumulates in the nucleus, where it acts as a coactivator for transcription factors of the TCF/LEF family, leading to activate Wnt responsive genes. Plays a key role in dorsoventral patterning: in prospective ventral blastomeres, its down-regulation by axin1 and axin2 leads to inhibit the Wnt signaling pathway, while in prospective dorsal blastomeres, degradation of axin results in stabilization and nuclear translocation of ctnnb1. The protein is Catenin beta-1 of Xenopus laevis (African clawed frog).